The primary structure comprises 1240 residues: DNA excision repair protein ERCC-6-like (1240 aa).

Position 14 is a phosphoserine (serine 14). The TPR 1 repeat unit spans residues 21–54; the sequence is YLRYVQEAKEAAKNGDLEESLKLFNLAKDIFPTK. Residues 110-278 form the Helicase ATP-binding domain; that stretch reads SLYKDGRKGG…WSLFDFACQG (169 aa). 123–130 contacts ATP; the sequence is DDMGLGKT. Positions 229-232 match the DEAH box motif; the sequence is DEAH. One can recognise a Helicase C-terminal domain in the interval 467–631; sequence FLMSLLERLQ…FTKQELKELF (165 aa). A disordered region spans residues 736-760; the sequence is FPSQQKKKGTEFNKPQPQPSRLLTK. Over residues 748–760 the composition is skewed to polar residues; sequence NKPQPQPSRLLTK. Residues serine 755 and serine 773 each carry the phosphoserine modification. The tract at residues 778–813 is disordered; it reads DQSAESEPQEHSEVHDVTSLQGSHHFNSTSDAGTIA. The span at 795–809 shows a compositional bias: polar residues; it reads TSLQGSHHFNSTSDA. The residue at position 821 (serine 821) is a Phosphoserine. The tract at residues 845–879 is disordered; sequence QKKGLQASPGQEAPSENLGSFHYLPRESSKASLGP. 4 positions are modified to phosphoserine: serine 966, serine 998, serine 1001, and serine 1021. The disordered stretch occupies residues 974–1085; it reads KEKSLQSPAA…EVNTSLHSRR (112 aa). Polar residues predominate over residues 978–998; it reads LQSPAANSRAKSALTLSLDSS. Residues 1049–1065 are compositionally biased toward polar residues; sequence SVKQFDASTPQSGSNPS. Threonine 1057 carries the post-translational modification Phosphothreonine. 2 positions are modified to phosphoserine: serine 1092 and serine 1112. Residues 1104–1117 are compositionally biased toward acidic residues; it reads MEERLDNSSEEESE. The segment at 1104-1185 is disordered; sequence MEERLDNSSE…MPDPPQDLAV (82 aa). The span at 1135 to 1165 shows a compositional bias: polar residues; the sequence is EQPSGATLASGNKSSNLTMSEPTSPAPQSSP. At serine 1172 the chain carries Phosphoserine. The TPR 2 repeat unit spans residues 1191–1224; it reads YESLVARGKELKECGKIQEALNCLVKALDIKSAD.

It belongs to the SNF2/RAD54 helicase family. Interacts with PLK1, which phosphorylates it. Both proteins are mutually dependent on each other for correct subcellular localization. Interacts (via N-terminal TPR repeat) with BEND3 (via BEN domains 1 and 3); the interaction is direct. Post-translationally, phosphorylation by PLK1 prevents the association with chromosome arms and restricts its localization to the kinetochore-centromere region. Expressed mainly in the neural tube and heart of 10.5 dpc embryo. Significantly down-regulated after alcohol exposure in embryonic brain and heart, but not in embryonic kidney, liver, or lung.

The protein localises to the chromosome. It localises to the centromere. It is found in the kinetochore. It catalyses the reaction ATP + H2O = ADP + phosphate + H(+). Functionally, DNA helicase that acts as a tension sensor that associates with catenated DNA which is stretched under tension until it is resolved during anaphase. Functions as ATP-dependent DNA translocase. Can promote Holliday junction branch migration (in vitro). In Mus musculus (Mouse), this protein is DNA excision repair protein ERCC-6-like (Ercc6l).